Consider the following 314-residue polypeptide: Olfactory receptor 5P67 (314 aa).

At 1–28 (MAFLEDGNHTAVTEFILLGLTDDPVLRV) the chain is on the extracellular side. An N-linked (GlcNAc...) asparagine glycan is attached at Asn-8. Residues 29–49 (ILFTIILCIYLVTVSGNLSTI) traverse the membrane as a helical segment. Residues 50–57 (LLIRVSSQ) lie on the Cytoplasmic side of the membrane. The chain crosses the membrane as a helical span at residues 58-78 (LHHPMYFFLSHVGSVDIGYSS). The Extracellular portion of the chain corresponds to 79–102 (SVTPNMLVNFLVEKHTIAYLGCGI). Cys-100 and Cys-192 are disulfide-bonded. Residues 103-123 (QLSSAAFFGTAECFLLATMAY) traverse the membrane as a helical segment. Residues 124–136 (DRFVAICNPLLYS) are Cytoplasmic-facing. The chain crosses the membrane as a helical span at residues 137-157 (TKMSTQTCIQLVVGSYTGGIL). The Extracellular segment spans residues 158–199 (NASFAIISFFSFLFCGPNRINHFYCDFAPLVELSCSDINVSV). The chain crosses the membrane as a helical span at residues 200–220 (VITTIFSASVTIITVFVIAIS). Over 221–240 (YTYILITILKMRSTEGRHKA) the chain is Cytoplasmic. A helical transmembrane segment spans residues 241-261 (FSTCTSYLTAVTLFYGTVTFI). At 262-274 (YVVPKSNYSTDQN) the chain is on the extracellular side. Asn-268 carries an N-linked (GlcNAc...) asparagine glycan. A helical transmembrane segment spans residues 275–295 (KVASVFYIVVIPMLNPLIYSL). At 296 to 314 (RNNDIKGALKRQLGKKTFS) the chain is on the cytoplasmic side.

This sequence belongs to the G-protein coupled receptor 1 family.

The protein resides in the cell membrane. In terms of biological role, potential odorant receptor. The protein is Olfactory receptor 5P67 of Mus musculus (Mouse).